Consider the following 451-residue polypeptide: MRECISIHVGQAGVQIGNACWELYCLEHGIQPDGQMPSDKTIGGGDDSFNTFFSETGAGKHVPRAVFVDLEPTVIDEVRTGTYRQLFHPEQLITGKEDAANNYARGHYTIGKEIIDLVLDRIRKLADQCTGLQGFLVFHSFGGGTGSGFTSLLMERLSVDYGKKSKLEFSIYPAPQVSTAVVEPYNSILTTHTTLEHSDCAFMVDNEAIYDICRRNLDIERPTYTNLNRLISQIVSSITASLRFDGALNVDLTEFQTNLVPYPRIHFPLATYAPVISAEKAYHEQLSVAEITNACFEPANQMVKCDPRHGKYMACCLLYRGDVVPKDVNAAIATIKTKRSIQFVDWCPTGFKVGINYQPPTVVPGGDLAKVQRAVCMLSNTTAIAEAWARLDHKFDLMYAKRAFVHWYVGEGMEEGEFSEAREDMAALEKDYEEVGVDSVEGEGEEEGEEY.

An MREC motif motif is present at residues 1-4; sequence MREC. GTP is bound by residues G10, Q11, A12, and Q15. K40 is modified (N6,N6,N6-trimethyllysine; alternate). K40 is subject to N6-acetyllysine; alternate. S48 bears the Phosphoserine mark. Residues E71, A99, S140, G143, G144, T145, G146, T179, E183, N206, Y224, and N228 each contribute to the GTP site. E71 provides a ligand contact to Mg(2+). S232 bears the Phosphoserine mark. L252 is a GTP binding site. The active site involves E254. Y282 is modified (3'-nitrotyrosine). K326 is covalently cross-linked (Glycyl lysine isopeptide (Lys-Gly) (interchain with G-Cter in ubiquitin)). At R339 the chain carries Omega-N-methylarginine. K370 participates in a covalent cross-link: Glycyl lysine isopeptide (Lys-Gly) (interchain with G-Cter in ubiquitin). The interval 432–451 is disordered; that stretch reads YEEVGVDSVEGEGEEEGEEY. S439 bears the Phosphoserine mark. 2 positions are modified to 5-glutamyl polyglutamate: E443 and E445. Position 451 is a 3'-nitrotyrosine (Y451).

The protein belongs to the tubulin family. As to quaternary structure, heterodimer of alpha- and beta-tubulin. A typical microtubule is a hollow water-filled tube with an outer diameter of 25 nm and an inner diameter of 15 nM. Alpha-beta heterodimers associate head-to-tail to form protofilaments running lengthwise along the microtubule wall with the beta-tubulin subunit facing the microtubule plus end conferring a structural polarity. Microtubules usually have 13 protofilaments but different protofilament numbers can be found in some organisms and specialized cells. Interacts with gamma-tubulin; the interaction allows microtubules to nucleate from the gamma-tubulin ring complex (gTuRC). Nascent microtubule interacts (via alpha-tubulin MREC motif) with TTC5/STRAP; this interaction may result in tubulin mRNA-targeted degradation. Component of sperm flagellar doublet microtubules. Mg(2+) is required as a cofactor. Some glutamate residues at the C-terminus are polyglutamylated, resulting in polyglutamate chains on the gamma-carboxyl group. Polyglutamylation plays a key role in microtubule severing by spastin (SPAST). SPAST preferentially recognizes and acts on microtubules decorated with short polyglutamate tails: severing activity by SPAST increases as the number of glutamates per tubulin rises from one to eight, but decreases beyond this glutamylation threshold. Glutamylation is also involved in cilia motility. Post-translationally, some glutamate residues at the C-terminus are monoglycylated but not polyglycylated due to the absence of functional TTLL10 in human. Monoglycylation is mainly limited to tubulin incorporated into cilia and flagella axonemes, which is required for their stability and maintenance. Flagella glycylation controls sperm motility. Both polyglutamylation and monoglycylation can coexist on the same protein on adjacent residues, and lowering glycylation levels increases polyglutamylation, and reciprocally. In terms of processing, acetylation of alpha chains at Lys-40 is located inside the microtubule lumen. This modification has been correlated with increased microtubule stability, intracellular transport and ciliary assembly. Methylation of alpha chains at Lys-40 is found in mitotic microtubules and is required for normal mitosis and cytokinesis contributing to genomic stability. Post-translationally, nitration of Tyr-451 is irreversible and interferes with normal dynein intracellular distribution. In terms of processing, undergoes a tyrosination/detyrosination cycle, the cyclic removal and re-addition of a C-terminal tyrosine residue by the enzymes tubulin tyrosine carboxypeptidase (MATCAP1/KIAA0895L, VASH1 or VASH2) and tubulin tyrosine ligase (TTL), respectively. Tyrosination promotes microtubule interaction with CAP-Gly domain-containing proteins such as CLIP1, CLIP2 and DCTN1. Tyrosination regulates the initiation of dynein-dynactin motility via interaction with DCTN1, which brings the dynein-dynactin complex into contact with microtubules. In neurons, tyrosinated tubulins mediate the initiation of retrograde vesicle transport. Post-translationally, detyrosination is involved in metaphase plate congression by guiding chromosomes during mitosis: detyrosination promotes interaction with CENPE, promoting pole-proximal transport of chromosomes toward the equator. Detyrosination increases microtubules-dependent mechanotransduction in dystrophic cardiac and skeletal muscle. In cardiomyocytes, detyrosinated microtubules are required to resist to contractile compression during contraction: detyrosination promotes association with desmin (DES) at force-generating sarcomeres, leading to buckled microtubules and mechanical resistance to contraction.

The protein localises to the cytoplasm. It is found in the cytoskeleton. The catalysed reaction is GTP + H2O = GDP + phosphate + H(+). Functionally, tubulin is the major constituent of microtubules, protein filaments consisting of alpha- and beta-tubulin heterodimers. Microtubules grow by the addition of GTP-tubulin dimers to the microtubule end, where a stabilizing cap forms. Below the cap, tubulin dimers are in GDP-bound state, owing to GTPase activity of alpha-tubulin. The chain is Tubulin alpha-1B chain (TUBA1B) from Homo sapiens (Human).